Consider the following 359-residue polypeptide: Salicylate carboxymethyltransferase (359 aa).

Tyr18 is an S-adenosyl-L-methionine binding site. Residues Tyr18, 21–25 (NSFIQ), and Gln25 contribute to the substrate site. Residues Gly59, 59–60 (GC), 59–61 (GCS), Asn65, 96–99 (LNDL), Asp98, 129–131 (SFY), and 146–148 (SYS) contribute to the S-adenosyl-L-methionine site. Residues 147–151 (YSLMW) and Trp151 contribute to the substrate site. Mg(2+) is bound by residues Asn162, Asp248, Phe250, and Asn251. Tyr255 contributes to the substrate binding site.

It belongs to the methyltransferase superfamily. SABATH family.

It carries out the reaction salicylate + S-adenosyl-L-methionine = methyl salicylate + S-adenosyl-L-homocysteine. Functionally, catalyzes the methylation of the free carboxyl end of the plant hormone salicylic acid (SA). Converts SA to SA methyl ester (MSA). The volatile compound MSA is hypothesized to act as an airborne signal that triggers defense responses in uninfected plants. MSA is an important chemoattractant for moth pollinated flowering plants. This is Salicylate carboxymethyltransferase (SAMT) from Clarkia breweri (Fairy fans).